Reading from the N-terminus, the 317-residue chain is Glycine--tRNA ligase alpha subunit (317 aa).

This sequence belongs to the class-II aminoacyl-tRNA synthetase family. Tetramer of two alpha and two beta subunits.

The protein localises to the cytoplasm. It carries out the reaction tRNA(Gly) + glycine + ATP = glycyl-tRNA(Gly) + AMP + diphosphate. The polypeptide is Glycine--tRNA ligase alpha subunit (Cupriavidus metallidurans (strain ATCC 43123 / DSM 2839 / NBRC 102507 / CH34) (Ralstonia metallidurans)).